The following is a 132-amino-acid chain: Spermatogenesis-associated protein 33 (132 aa).

Residues 1-60 (MGQSKSKPREKKEEEKSTTTLVTKSKEKVMEKEAKQSDKESQPAESLLFATSKHSRPSSS) are interaction with ATG16L1. The interval 1 to 81 (MGQSKSKPRE…SKKRSVIPQI (81 aa)) is disordered. A compositionally biased stretch (basic and acidic residues) spans 24–42 (KSKEKVMEKEAKQSDKESQ). Positions 61–132 (SEDKPETKQR…IAAYDVHNTE (72 aa)) are interaction with VDAC2. A PQIIIT motif is present at residues 79-84 (PQIIIT). Ser87 is subject to Phosphoserine. The interval 110 to 132 (DWGPYHRHRSPSTIAAYDVHNTE) is disordered.

As to quaternary structure, interacts (via PQIIIT motif) with PPP3R2 and PPP3CC. Interacts with VDAC2. Interacts with ATG16L1 (via WD repeats). Interacts with PPP3R1, PPP3CA and PPP3CB. In terms of tissue distribution, predominantly expressed in the testis (at protein level). Expressed in the sperm midpiece (at protein level).

The protein localises to the cytoplasm. Its subcellular location is the cytosol. It is found in the nucleus. The protein resides in the mitochondrion. Its function is as follows. Plays an important role in sperm motility and male fertility. Required for sperm midpiece flexibility and for the localization of sperm calcineurin to the mitochondria. Promotes mitophagy as well as acts as an autophagy mediator in male germline cells. Links damaged mitochondria to autophagosomes via its binding to the outer mitochondrial membrane protein VDAC2, as well as to key autophagy machinery component ATG16L1. In Mus musculus (Mouse), this protein is Spermatogenesis-associated protein 33 (Spata33).